Consider the following 245-residue polypeptide: Cysteine-rich secretory protein 3 (245 aa).

Positions 1–22 are cleaved as a signal peptide; sequence MALLPVLLFLAAVLLPFFPASG. Residues 42–171 enclose the SCP domain; sequence VNKHNDLRRT…TLKYYYVCQY (130 aa). 5 disulfides stabilise this stretch: cysteine 191/cysteine 198, cysteine 194/cysteine 203, cysteine 207/cysteine 240, cysteine 216/cysteine 234, and cysteine 225/cysteine 238. Positions 207–240 constitute a ShKT domain; it reads CEYEDLVSNCDSLKKIAGCEHELLKENCKTTCQC.

This sequence belongs to the CRISP family. Interacts with A1BG. As to expression, expressed in the salivary gland, in the ampulla and the seminal vesicle.

It is found in the secreted. This chain is Cysteine-rich secretory protein 3 (CRISP3), found in Equus caballus (Horse).